Consider the following 642-residue polypeptide: Mini-chromosome maintenance complex-binding protein (642 aa).

The span at 151 to 161 (ARVSPSTSYTP) shows a compositional bias: polar residues. The tract at residues 151-196 (ARVSPSTSYTPSRHKRSYEDDEDMDLQPSKQKEQHPGSRQAGGLGG) is disordered. Ser-154 bears the Phosphoserine mark. A Phosphothreonine modification is found at Thr-160. Phosphoserine is present on residues Ser-167 and Ser-298.

Belongs to the MCMBP family. Interacts with the MCM complex: associates with the MCM3-7 complex which lacks MCM2, while it does not interact with the MCM complex when MCM2 is present (MCM2-7 complex). Interacts with the RPA complex, when composed of all RPA1, RPA2 and RPA3 components, but not with RPA1 or RPA2 alone.

The protein localises to the nucleus. Functionally, associated component of the MCM complex that acts as a regulator of DNA replication. Binds to the MCM complex during late S phase and promotes the disassembly of the MCM complex from chromatin, thereby acting as a key regulator of pre-replication complex (pre-RC) unloading from replicated DNA. Can dissociate the MCM complex without addition of ATP; probably acts by destabilizing interactions of each individual subunits of the MCM complex. Required for sister chromatid cohesion. The sequence is that of Mini-chromosome maintenance complex-binding protein (Mcmbp) from Mus musculus (Mouse).